Consider the following 295-residue polypeptide: Probable aspartoacylase (295 aa).

His-16 and Glu-19 together coordinate Zn(2+). Residues Arg-58 and 65-66 (NR) each bind substrate. His-107 provides a ligand contact to Zn(2+). The substrate site is built by Glu-166 and Tyr-277.

It belongs to the AspA/AstE family. Aspartoacylase subfamily. The cofactor is Zn(2+).

It carries out the reaction an N-acyl-L-aspartate + H2O = a carboxylate + L-aspartate. The protein is Probable aspartoacylase of Acaryochloris marina (strain MBIC 11017).